A 521-amino-acid polypeptide reads, in one-letter code: Cholesterol side-chain cleavage enzyme, mitochondrial (521 aa).

Residues 1-39 constitute a mitochondrion transit peptide; that stretch reads MLAKGLPPRSVLVKGCQTFLSAPKERLGHLRVPTSEGAG. Cysteine 462 serves as a coordination point for heme.

This sequence belongs to the cytochrome P450 family. In terms of assembly, interacts with FDX1/adrenodoxin. It depends on heme as a cofactor.

Its subcellular location is the mitochondrion inner membrane. It catalyses the reaction 6 reduced [adrenodoxin] + cholesterol + 3 O2 + 6 H(+) = 4-methylpentanal + pregnenolone + 6 oxidized [adrenodoxin] + 4 H2O. The catalysed reaction is 2 reduced [adrenodoxin] + cholesterol + O2 + 2 H(+) = (22R)-hydroxycholesterol + 2 oxidized [adrenodoxin] + H2O. The enzyme catalyses (22R)-hydroxycholesterol + 2 reduced [adrenodoxin] + O2 + 2 H(+) = (20R,22R)-20,22-dihydroxycholesterol + 2 oxidized [adrenodoxin] + H2O. It carries out the reaction (20R,22R)-20,22-dihydroxycholesterol + 2 reduced [adrenodoxin] + O2 + 2 H(+) = 4-methylpentanal + pregnenolone + 2 oxidized [adrenodoxin] + 2 H2O. It functions in the pathway lipid metabolism; C21-steroid hormone metabolism. It participates in steroid metabolism; cholesterol metabolism. In terms of biological role, a cytochrome P450 monooxygenase that catalyzes the side-chain hydroxylation and cleavage of cholesterol to pregnenolone, the precursor of most steroid hormones. Catalyzes three sequential oxidation reactions of cholesterol, namely the hydroxylation at C22 followed with the hydroxylation at C20 to yield 20R,22R-hydroxycholesterol that is further cleaved between C20 and C22 to yield the C21-steroid pregnenolone and 4-methylpentanal. Mechanistically, uses molecular oxygen inserting one oxygen atom into a substrate and reducing the second into a water molecule. Two electrons are provided by NADPH via a two-protein mitochondrial transfer system comprising flavoprotein FDXR (adrenodoxin/ferredoxin reductase) and nonheme iron-sulfur protein FDX1 or FDX2 (adrenodoxin/ferredoxin). This chain is Cholesterol side-chain cleavage enzyme, mitochondrial (CYP11A1), found in Macaca fascicularis (Crab-eating macaque).